Reading from the N-terminus, the 99-residue chain is uncharacterized protein (99 aa).

This is an uncharacterized protein from Dictyostelium discoideum (Social amoeba).